The primary structure comprises 367 residues: Forkhead box protein I2-B (367 aa).

Residues 31–40 (QQQNQQLPQR) show a composition bias toward low complexity. Residues 31 to 51 (QQQNQQLPQRPAAPPAPGYGL) form a disordered region. The segment at residues 124-218 (RPPYSYSSLI…DNGNFRRKRK (95 aa)) is a DNA-binding region (fork-head). The interval 224 to 254 (VGAGFDEESNEDKKPLALKSLGPDSPGGASV) is disordered.

It localises to the nucleus. Its function is as follows. Possible transcriptional activator. The protein is Forkhead box protein I2-B (foxi2-b) of Xenopus laevis (African clawed frog).